The sequence spans 137 residues: Large ribosomal subunit protein uL16 (137 aa).

A compositionally biased stretch (basic residues) spans 1-17 (MLQPKRTKFRKQQKGRN). The interval 1–24 (MLQPKRTKFRKQQKGRNRGLAQSG) is disordered.

The protein belongs to the universal ribosomal protein uL16 family. Part of the 50S ribosomal subunit.

Its function is as follows. Binds 23S rRNA and is also seen to make contacts with the A and possibly P site tRNAs. The polypeptide is Large ribosomal subunit protein uL16 (Dichelobacter nodosus (strain VCS1703A)).